The primary structure comprises 631 residues: 2-isopropylmalate synthase 2, chloroplastic (631 aa).

The transit peptide at Met1 to Ser46 directs the protein to the chloroplast. In terms of domain architecture, Pyruvate carboxyltransferase spans Val87 to Val360. A divalent metal cation contacts are provided by Asp96, His293, and Asn329.

It belongs to the alpha-IPM synthase/homocitrate synthase family. LeuA type 1 subfamily. In terms of assembly, homotetramer. Mg(2+) is required as a cofactor. It depends on Mn(2+) as a cofactor. As to expression, expressed in roots, stems, leaves, flowers and siliques.

It is found in the plastid. It localises to the chloroplast. The enzyme catalyses 3-methyl-2-oxobutanoate + acetyl-CoA + H2O = (2S)-2-isopropylmalate + CoA + H(+). It functions in the pathway amino-acid biosynthesis; L-leucine biosynthesis; L-leucine from 3-methyl-2-oxobutanoate: step 1/4. With respect to regulation, feedback inhibition by Leu. In terms of biological role, catalyzes the condensation of the acetyl group of acetyl-CoA with 3-methyl-2-oxobutanoate (2-oxoisovalerate) to form 3-carboxy-3-hydroxy-4-methylpentanoate (2-isopropylmalate). Involved in Leu biosynthesis, but does not participate in the chain elongation of glucosinolates. The protein is 2-isopropylmalate synthase 2, chloroplastic of Arabidopsis thaliana (Mouse-ear cress).